We begin with the raw amino-acid sequence, 261 residues long: 3-methyl-2-oxobutanoate hydroxymethyltransferase (261 aa).

2 residues coordinate Mg(2+): D44 and D83. 3-methyl-2-oxobutanoate contacts are provided by residues 44-45 (DS), D83, and K112. E114 provides a ligand contact to Mg(2+). E181 serves as the catalytic Proton acceptor.

Belongs to the PanB family. In terms of assembly, homodecamer; pentamer of dimers. Mg(2+) serves as cofactor.

The protein resides in the cytoplasm. It carries out the reaction 3-methyl-2-oxobutanoate + (6R)-5,10-methylene-5,6,7,8-tetrahydrofolate + H2O = 2-dehydropantoate + (6S)-5,6,7,8-tetrahydrofolate. Its pathway is cofactor biosynthesis; (R)-pantothenate biosynthesis; (R)-pantoate from 3-methyl-2-oxobutanoate: step 1/2. In terms of biological role, catalyzes the reversible reaction in which hydroxymethyl group from 5,10-methylenetetrahydrofolate is transferred onto alpha-ketoisovalerate to form ketopantoate. This is 3-methyl-2-oxobutanoate hydroxymethyltransferase from Acidithiobacillus ferrooxidans (strain ATCC 23270 / DSM 14882 / CIP 104768 / NCIMB 8455) (Ferrobacillus ferrooxidans (strain ATCC 23270)).